The following is an 809-amino-acid chain: Leucine--tRNA ligase (809 aa).

The 'HIGH' region motif lies at 40–50 (PYPSGRIHMGH). Residues 579-583 (KMSKS) carry the 'KMSKS' region motif. Lysine 582 lines the ATP pocket.

The protein belongs to the class-I aminoacyl-tRNA synthetase family.

The protein resides in the cytoplasm. The enzyme catalyses tRNA(Leu) + L-leucine + ATP = L-leucyl-tRNA(Leu) + AMP + diphosphate. This is Leucine--tRNA ligase from Campylobacter jejuni (strain RM1221).